A 100-amino-acid chain; its full sequence is Small ribosomal subunit protein uS14c (100 aa).

Belongs to the universal ribosomal protein uS14 family. Part of the 30S ribosomal subunit.

The protein localises to the plastid. The protein resides in the chloroplast. Functionally, binds 16S rRNA, required for the assembly of 30S particles. The chain is Small ribosomal subunit protein uS14c from Tupiella akineta (Green alga).